Reading from the N-terminus, the 512-residue chain is ATP synthase subunit alpha (512 aa).

169 to 176 contacts ATP; the sequence is GDRQTGKT.

It belongs to the ATPase alpha/beta chains family. F-type ATPases have 2 components, CF(1) - the catalytic core - and CF(0) - the membrane proton channel. CF(1) has five subunits: alpha(3), beta(3), gamma(1), delta(1), epsilon(1). CF(0) has three main subunits: a(1), b(2) and c(9-12). The alpha and beta chains form an alternating ring which encloses part of the gamma chain. CF(1) is attached to CF(0) by a central stalk formed by the gamma and epsilon chains, while a peripheral stalk is formed by the delta and b chains.

The protein localises to the cell inner membrane. It carries out the reaction ATP + H2O + 4 H(+)(in) = ADP + phosphate + 5 H(+)(out). Produces ATP from ADP in the presence of a proton gradient across the membrane. The alpha chain is a regulatory subunit. This chain is ATP synthase subunit alpha, found in Rickettsia bellii (strain OSU 85-389).